Consider the following 348-residue polypeptide: Autophagy-related protein 27 (348 aa).

The signal sequence occupies residues 1–20; it reads MYRPDLLAFLLPLLAAPVFS. Residues 21-274 are Lumenal-facing; the sequence is AETLDCGKIR…DDGGDNSSSH (254 aa). The 232-residue stretch at 24-255 folds into the MRH domain; that stretch reads LDCGKIRADG…TWHTKYACEK (232 aa). 3 cysteine pairs are disulfide-bonded: Cys-26–Cys-69, Cys-82–Cys-89, and Cys-175–Cys-253. 2 N-linked (GlcNAc...) asparagine glycosylation sites follow: Asn-61 and Asn-84. Residues 180–208 are compositionally biased toward basic and acidic residues; that stretch reads EGTEGEWVSEEKYEKRADEKKDDDKKEDG. Residues 180–219 form a disordered region; that stretch reads EGTEGEWVSEEKYEKRADEKKDDDKKEDGGDKDEGESTLE. Asn-226 and Asn-270 each carry an N-linked (GlcNAc...) asparagine glycan. A helical membrane pass occupies residues 275–295; that stretch reads WGFFTWFVLIAFLLIAGYLIF. Residues 296–348 are Cytoplasmic-facing; sequence SSWINFTRYGARGWDLLPHSDTIRDIPYLLKDFIRRILNTVQGTGSRGGYSAV.

Belongs to the ATG27 family. Forms a complex with ATG9 and ATG23.

The protein resides in the cytoplasmic vesicle membrane. It localises to the golgi apparatus membrane. Its subcellular location is the mitochondrion membrane. It is found in the preautophagosomal structure membrane. Functionally, effector of VPS34 phosphatidylinositol 3-phosphate kinase signaling. Regulates the cytoplasm to vacuole transport (Cvt) vesicle formation. Plays a role in ATG protein retrieval from the pre-autophagosomal structure (PAS) and is especially required for autophagy-dependent cycling of ATG9. Autophagy is required for proper vegetative growth, asexual/sexual reproduction, and full virulence. Autophagy is particularly involved in the biosynthesis of deoxynivalenol (DON), an important virulence determinant. The polypeptide is Autophagy-related protein 27 (Gibberella zeae (strain ATCC MYA-4620 / CBS 123657 / FGSC 9075 / NRRL 31084 / PH-1) (Wheat head blight fungus)).